Reading from the N-terminus, the 517-residue chain is Fluconazole resistance protein 1 (517 aa).

The zn(2)-C6 fungal-type DNA-binding region spans 26 to 52; that stretch reads CDSCRIKKTKCDGKKPCNRCTLDNKIC. 4 disordered regions span residues 106–137, 250–270, 284–307, and 378–403; these read KSVD…QNST, SAQF…QQQQ, SDIE…PPTS, and GSIQ…VSSF. Residues 113–124 are compositionally biased toward low complexity; sequence SSPASSTPNSSS. Over residues 250-260 the composition is skewed to polar residues; the sequence is SAQFSKGTFSP. The span at 261 to 270 shows a compositional bias: low complexity; it reads QQQQLQQQQQ. A compositionally biased stretch (polar residues) spans 298–307; sequence NSGSVSPPTS. The segment covering 388-398 has biased composition (basic residues); it reads GSVHKPVRNHS.

It localises to the nucleus. Its function is as follows. Transcription factor that acts as a negative regulator of fluconazole resistance in C.albicans. Also confers fluconazole resistance in S.cerevisiae by activation of the PDR5 gene. The protein is Fluconazole resistance protein 1 (FCR1) of Candida albicans (Yeast).